Here is a 486-residue protein sequence, read N- to C-terminus: Bifunctional protein HldE (486 aa).

The ribokinase stretch occupies residues 1–331 (MAEHDDGDLI…VDAVKPASGA (331 aa)). 208–211 (NRRE) lines the ATP pocket. Aspartate 277 is a catalytic residue. Residues 357-486 (FTNGCFDLLH…TTATVTRLRS (130 aa)) form a cytidylyltransferase region.

In the N-terminal section; belongs to the carbohydrate kinase PfkB family. This sequence in the C-terminal section; belongs to the cytidylyltransferase family. As to quaternary structure, homodimer.

It catalyses the reaction D-glycero-beta-D-manno-heptose 7-phosphate + ATP = D-glycero-beta-D-manno-heptose 1,7-bisphosphate + ADP + H(+). The enzyme catalyses D-glycero-beta-D-manno-heptose 1-phosphate + ATP + H(+) = ADP-D-glycero-beta-D-manno-heptose + diphosphate. It participates in nucleotide-sugar biosynthesis; ADP-L-glycero-beta-D-manno-heptose biosynthesis; ADP-L-glycero-beta-D-manno-heptose from D-glycero-beta-D-manno-heptose 7-phosphate: step 1/4. Its pathway is nucleotide-sugar biosynthesis; ADP-L-glycero-beta-D-manno-heptose biosynthesis; ADP-L-glycero-beta-D-manno-heptose from D-glycero-beta-D-manno-heptose 7-phosphate: step 3/4. Its function is as follows. Catalyzes the phosphorylation of D-glycero-D-manno-heptose 7-phosphate at the C-1 position to selectively form D-glycero-beta-D-manno-heptose-1,7-bisphosphate. Functionally, catalyzes the ADP transfer from ATP to D-glycero-beta-D-manno-heptose 1-phosphate, yielding ADP-D-glycero-beta-D-manno-heptose. This Acidiphilium cryptum (strain JF-5) protein is Bifunctional protein HldE.